A 116-amino-acid chain; its full sequence is PTS system galactose-specific EIIA component (116 aa).

A PTS EIIA type-3 domain is found at D11 to R109. Catalysis depends on H85, which acts as the Tele-phosphohistidine intermediate. A Phosphohistidine; by HPr modification is found at H85. Position 88 (D88) interacts with Mg(2+).

As to quaternary structure, homotrimer. Mg(2+) serves as cofactor.

In terms of biological role, the phosphoenolpyruvate-dependent sugar phosphotransferase system (sugar PTS), a major carbohydrate active transport system, catalyzes the phosphorylation of incoming sugar substrates concomitantly with their translocation across the cell membrane. Involved in galactose transport with PtcB and Lmg_0963. The polypeptide is PTS system galactose-specific EIIA component (Lactococcus lactis subsp. cremoris (strain MG1363)).